The following is a 226-amino-acid chain: Protein FMP52-1, mitochondrial (226 aa).

A mitochondrion-targeting transit peptide spans M1–K43.

This sequence belongs to the FMP52 family.

It is found in the mitochondrion outer membrane. The polypeptide is Protein FMP52-1, mitochondrial (FMP521) (Scheffersomyces stipitis (strain ATCC 58785 / CBS 6054 / NBRC 10063 / NRRL Y-11545) (Yeast)).